Here is an 817-residue protein sequence, read N- to C-terminus: Phosphoenolpyruvate synthase (817 aa).

The active-site Tele-phosphohistidine intermediate is the H442. R540, R587, E684, G706, T707, N708, and D709 together coordinate substrate. E684 serves as a coordination point for Mg(2+). D709 contributes to the Mg(2+) binding site. C756 serves as the catalytic Proton donor.

Belongs to the PEP-utilizing enzyme family. As to quaternary structure, homooctamer. Mg(2+) is required as a cofactor.

It carries out the reaction pyruvate + ATP + H2O = phosphoenolpyruvate + AMP + phosphate + 2 H(+). The protein operates within carbohydrate biosynthesis; gluconeogenesis. Catalyzes the phosphorylation of pyruvate to phosphoenolpyruvate. This chain is Phosphoenolpyruvate synthase (ppsA), found in Pyrococcus furiosus (strain ATCC 43587 / DSM 3638 / JCM 8422 / Vc1).